Consider the following 107-residue polypeptide: Universal stress protein B homolog (107 aa).

The next 2 membrane-spanning stretches (helical) occupy residues 6-26 (IILF…LTAL) and 86-106 (VREL…AAFL).

Belongs to the universal stress protein B family.

It localises to the cell inner membrane. The protein is Universal stress protein B homolog of Vibrio vulnificus (strain CMCP6).